A 229-amino-acid chain; its full sequence is Cytidylate kinase (229 aa).

An ATP-binding site is contributed by 12–20 (GPSGAGKGT).

Belongs to the cytidylate kinase family. Type 1 subfamily.

The protein localises to the cytoplasm. It catalyses the reaction CMP + ATP = CDP + ADP. The catalysed reaction is dCMP + ATP = dCDP + ADP. This is Cytidylate kinase from Shewanella frigidimarina (strain NCIMB 400).